A 354-amino-acid chain; its full sequence is Protein Wnt-11 (354 aa).

Positions 1–24 (MRARPQVCEALLFALALHTGVCYG) are cleaved as a signal peptide. N-linked (GlcNAc...) asparagine glycosylation is found at asparagine 40 and asparagine 90. 3 disulfides stabilise this stretch: cysteine 80/cysteine 91, cysteine 130/cysteine 138, and cysteine 140/cysteine 157. Asparagine 160 is a glycosylation site (N-linked (GlcNAc...) asparagine). 8 disulfides stabilise this stretch: cysteine 209–cysteine 223, cysteine 211–cysteine 218, cysteine 283–cysteine 314, cysteine 299–cysteine 309, cysteine 313–cysteine 353, cysteine 329–cysteine 344, cysteine 331–cysteine 341, and cysteine 336–cysteine 337. Serine 215 carries O-palmitoleoyl serine; by PORCN lipidation. N-linked (GlcNAc...) asparagine glycans are attached at residues asparagine 300 and asparagine 304.

The protein belongs to the Wnt family. Palmitoleoylation is required for efficient binding to frizzled receptors. Depalmitoleoylation leads to Wnt signaling pathway inhibition.

Its subcellular location is the secreted. The protein localises to the extracellular space. It localises to the extracellular matrix. Ligand for members of the frizzled family of seven transmembrane receptors. Probable developmental protein. May be a signaling molecule which affects the development of discrete regions of tissues. Is likely to signal over only few cell diameters. The protein is Protein Wnt-11 (Wnt11) of Mus musculus (Mouse).